A 461-amino-acid chain; its full sequence is E3 ubiquitin-protein ligase TRIM15 (461 aa).

The segment at 12-57 adopts an RING-type zinc-finger fold; it reads CSDCQGRLEDAVTAACGHTFCRLCLPLPPQMGAQPSSRVLLCPVCQ. The segment at 74–115 adopts a B box-type zinc-finger fold; the sequence is LGETYCEEHGEKIYFFCENDAEFLCVFCREGPSHQAHAVGFL. Zn(2+)-binding residues include Cys-79, His-82, Cys-101, and His-107. Residues 123–230 are a coiled coil; it reads RDRLRGRLEA…EKCQQPASEL (108 aa). The 190-residue stretch at 272-461 folds into the B30.2/SPRY domain; the sequence is EMLRAFSENL…KKGSCLTLKG (190 aa).

Belongs to the TRIM/RBCC family. Interacts with paxillin/PXN; this interaction recruits TRIM15 to focal adhesions. Interacts with TRIM8; this interaction prevents TRIM8 cytoplasmic translocation.

The protein localises to the cytoplasm. It localises to the nucleus. Its subcellular location is the cell junction. The protein resides in the focal adhesion. The catalysed reaction is S-ubiquitinyl-[E2 ubiquitin-conjugating enzyme]-L-cysteine + [acceptor protein]-L-lysine = [E2 ubiquitin-conjugating enzyme]-L-cysteine + N(6)-ubiquitinyl-[acceptor protein]-L-lysine.. E3 ubiquitin ligase that plays a role in several processes including innate antiviral immnity, cell migration and chemotaxis. Acts as a 'Lys-63'-specific ubiquitin ligase for MAPK1/ERK2 and MAPK3/ERK1, promoting their activation by facilitating their interaction with MAP2K1 and MAP2K2. Also plays a role in cell migration and chemotaxis by acting as a stable focal adhesion component upon recruitment by multi-adapter protein paxillin/PXN. Functions in the RIGI-mediated interferon induction pathway upstream or at the level of MAVS. Inhibits NF-kappa-B activation by turnover of 'Lys-63'-linked ubiquitination of MAP3K7/TAK1. Mechanistically, prevents TRIM8 cytoplasmic translocation and thus inhibits TRIM8-mediated 'Lys-63'-linked polyubiquitination of MAP3K7/TAK1 in the cytoplasm. Also has an important regulatory effect on the activation of hepatic stellate cells (HSCs). The sequence is that of E3 ubiquitin-protein ligase TRIM15 (TRIM15) from Sus scrofa (Pig).